The following is a 121-amino-acid chain: Large ribosomal subunit protein eL18 (121 aa).

This sequence belongs to the eukaryotic ribosomal protein eL18 family.

The sequence is that of Large ribosomal subunit protein eL18 from Methanocaldococcus jannaschii (strain ATCC 43067 / DSM 2661 / JAL-1 / JCM 10045 / NBRC 100440) (Methanococcus jannaschii).